A 229-amino-acid chain; its full sequence is Large ribosomal subunit protein uL1 (229 aa).

This sequence belongs to the universal ribosomal protein uL1 family. In terms of assembly, part of the 50S ribosomal subunit.

Its function is as follows. Binds directly to 23S rRNA. The L1 stalk is quite mobile in the ribosome, and is involved in E site tRNA release. Functionally, protein L1 is also a translational repressor protein, it controls the translation of the L11 operon by binding to its mRNA. This is Large ribosomal subunit protein uL1 from Lacticaseibacillus casei (strain BL23) (Lactobacillus casei).